The primary structure comprises 289 residues: Purine nucleoside phosphorylase (289 aa).

The residue at position 1 (Met1) is an N-acetylmethionine. Residues Ser33, His64, and 84-86 contribute to the phosphate site; that span reads RFH. A purine D-ribonucleoside is bound at residue Tyr88. Residue Ala116 participates in phosphate binding. 2 residues coordinate a purine D-ribonucleoside: Glu201 and Met219. Ser220 contributes to the phosphate binding site. Asn243 provides a ligand contact to a purine D-ribonucleoside. Ser251 is modified (phosphoserine). A purine D-ribonucleoside is bound at residue His257.

The protein belongs to the PNP/MTAP phosphorylase family. As to quaternary structure, homotrimer. As to expression, expressed in red blood cells; overexpressed in red blood cells (cytoplasm) of patients with hereditary non-spherocytic hemolytic anemia of unknown etiology.

It localises to the cytoplasm. The enzyme catalyses inosine + phosphate = alpha-D-ribose 1-phosphate + hypoxanthine. The catalysed reaction is guanosine + phosphate = alpha-D-ribose 1-phosphate + guanine. It catalyses the reaction 2'-deoxyguanosine + phosphate = 2-deoxy-alpha-D-ribose 1-phosphate + guanine. It carries out the reaction 2'-deoxyinosine + phosphate = 2-deoxy-alpha-D-ribose 1-phosphate + hypoxanthine. It functions in the pathway purine metabolism; purine nucleoside salvage. Its activity is regulated as follows. Inhibited by 5'-deaza-1'-aza-2c-deoxy-1'-(9-methylene)-Immucilin-G (DADMe-ImmG). Its function is as follows. Catalyzes the phosphorolytic breakdown of the N-glycosidic bond in the beta-(deoxy)ribonucleoside molecules, with the formation of the corresponding free purine bases and pentose-1-phosphate. Preferentially acts on 6-oxopurine nucleosides including inosine and guanosine. The polypeptide is Purine nucleoside phosphorylase (PNP) (Homo sapiens (Human)).